A 900-amino-acid polypeptide reads, in one-letter code: Alanine--tRNA ligase (900 aa).

Residues histidine 580, histidine 584, cysteine 683, and histidine 687 each contribute to the Zn(2+) site.

This sequence belongs to the class-II aminoacyl-tRNA synthetase family. Zn(2+) is required as a cofactor.

It is found in the cytoplasm. It carries out the reaction tRNA(Ala) + L-alanine + ATP = L-alanyl-tRNA(Ala) + AMP + diphosphate. Its function is as follows. Catalyzes the attachment of alanine to tRNA(Ala) in a two-step reaction: alanine is first activated by ATP to form Ala-AMP and then transferred to the acceptor end of tRNA(Ala). Also edits incorrectly charged Ser-tRNA(Ala) and Gly-tRNA(Ala) via its editing domain. This chain is Alanine--tRNA ligase, found in Mycolicibacterium paratuberculosis (strain ATCC BAA-968 / K-10) (Mycobacterium paratuberculosis).